We begin with the raw amino-acid sequence, 389 residues long: MAVRLCDVASLLRSGSWAAEPWTGQVIAAMETQLSNGPTCNNTANCPNTINCSSPVESNNTEDSKTNLIVNYLPQNMTQEELKSLFGSIGEIESCKLVRDKITEGQSLGYGFVNYIDPKDAEKAINTLNGLRLQTKTIKVSYARPSSASIRDANLYVSGLPKTMTQKELEQLFSQYGRIITSRILVDQVTGVSRGVGFIRFDKRIEAEEAIKGLNGQKPPGATEPITVKFANNPSQKVNHTILSQLYQSPNRRYPGPLAQQAQRFRLDNLLNMAYGGIKSRFSPMAIDGMTSLAGINFPGHAGTGWCIFVYNLAPDADESILWQMFGPFGAVTNVKVIRDFNTNKCKGFGFVTMTNYDEAAMAIASLNGYRLGDRVLQVSFKTSKTHKA.

RRM domains lie at 66 to 145 (TNLI…YARP), 153 to 233 (ANLY…FANN), and 306 to 384 (WCIF…FKTS).

The protein belongs to the RRM elav family. In terms of assembly, part of a ribonucleoprotein (RNP) complex, at least composed of elavl1/elrA and/or elavl2/elrB, igf2bp3/vg1RBP, ddx6/Xp54, ybx2/frgy2, lsm14b/rap55b and, in a subset of RNP complexes, stau1/staufen. Binds RNA as a homooligomer. As to expression, expressed in brain, testis and ovary. Ovarian expression is restricted to follicle cells surrounding the oocyte. From the early tailbud stage, expression is neural-specific and is seen in both the central and peripheral nervous system in differentiating neurons but not proliferating precursors. Expressed in the retina from stage 32 with expression becoming restricted to the ganglion cell layer by later stages.

The protein resides in the cytoplasm. The protein localises to the cell cortex. Functionally, binds to poly-U elements and AU-rich elements (AREs) in the 3'-UTR of target mRNAs. Required for the vegetal localization of vg1 mRNA. Probably required for nervous system development. The protein is ELAV-like protein 2 (elavl2) of Xenopus laevis (African clawed frog).